A 257-amino-acid chain; its full sequence is Imidazole glycerol phosphate synthase subunit HisF (257 aa).

Catalysis depends on residues Asp11 and Asp130.

The protein belongs to the HisA/HisF family. Heterodimer of HisH and HisF.

The protein resides in the cytoplasm. It catalyses the reaction 5-[(5-phospho-1-deoxy-D-ribulos-1-ylimino)methylamino]-1-(5-phospho-beta-D-ribosyl)imidazole-4-carboxamide + L-glutamine = D-erythro-1-(imidazol-4-yl)glycerol 3-phosphate + 5-amino-1-(5-phospho-beta-D-ribosyl)imidazole-4-carboxamide + L-glutamate + H(+). It functions in the pathway amino-acid biosynthesis; L-histidine biosynthesis; L-histidine from 5-phospho-alpha-D-ribose 1-diphosphate: step 5/9. Functionally, IGPS catalyzes the conversion of PRFAR and glutamine to IGP, AICAR and glutamate. The HisF subunit catalyzes the cyclization activity that produces IGP and AICAR from PRFAR using the ammonia provided by the HisH subunit. The chain is Imidazole glycerol phosphate synthase subunit HisF from Shewanella woodyi (strain ATCC 51908 / MS32).